Reading from the N-terminus, the 243-residue chain is Adenosine 5'-phosphosulfate reductase (243 aa).

Positions 126, 127, 209, and 212 each coordinate [4Fe-4S] cluster. Cys235 acts as the Nucleophile; cysteine thiosulfonate intermediate in catalysis.

Belongs to the PAPS reductase family. CysH subfamily. It depends on [4Fe-4S] cluster as a cofactor.

It localises to the cytoplasm. It carries out the reaction [thioredoxin]-disulfide + sulfite + AMP + 2 H(+) = adenosine 5'-phosphosulfate + [thioredoxin]-dithiol. It participates in sulfur metabolism; hydrogen sulfide biosynthesis; sulfite from sulfate. In terms of biological role, catalyzes the formation of sulfite from adenosine 5'-phosphosulfate (APS) using thioredoxin as an electron donor. This is Adenosine 5'-phosphosulfate reductase from Staphylococcus epidermidis (strain ATCC 35984 / DSM 28319 / BCRC 17069 / CCUG 31568 / BM 3577 / RP62A).